We begin with the raw amino-acid sequence, 346 residues long: Uroporphyrinogen decarboxylase (346 aa).

Residues 21-25 (RQAGR), D71, Y146, S201, and H316 each bind substrate.

This sequence belongs to the uroporphyrinogen decarboxylase family. As to quaternary structure, homodimer.

Its subcellular location is the cytoplasm. The catalysed reaction is uroporphyrinogen III + 4 H(+) = coproporphyrinogen III + 4 CO2. It functions in the pathway porphyrin-containing compound metabolism; protoporphyrin-IX biosynthesis; coproporphyrinogen-III from 5-aminolevulinate: step 4/4. Catalyzes the decarboxylation of four acetate groups of uroporphyrinogen-III to yield coproporphyrinogen-III. This is Uroporphyrinogen decarboxylase from Rickettsia rickettsii (strain Iowa).